The sequence spans 1105 residues: Carbamoyl phosphate synthase large chain (1105 aa).

The carboxyphosphate synthetic domain stretch occupies residues 1-402 (MPKRDDIEKV…ALGKAVRSLE (402 aa)). The ATP site is built by R129, R169, G175, G176, K208, V210, E215, G241, I242, H243, Q285, and E299. Residues 133-328 (KTAMKNCGLE…IAKISALLAV (196 aa)) form the ATP-grasp 1 domain. 3 residues coordinate Mg(2+): Q285, E299, and N301. Residues Q285, E299, and N301 each contribute to the Mn(2+) site. The segment at 403–542 (LDIAPKLDLR…STYNGMENET (140 aa)) is oligomerization domain. The interval 543-945 (IPSKRRKIMV…AFAKAQLSAD (403 aa)) is carbamoyl phosphate synthetic domain. Positions 667–858 (AKFLKQSGLS…VAKIAAKTII (192 aa)) constitute an ATP-grasp 2 domain. ATP contacts are provided by R703, K742, L744, E749, G774, I775, H776, S777, Q817, and E829. Mg(2+) is bound by residues Q817, E829, and N831. Residues Q817, E829, and N831 each coordinate Mn(2+). The MGS-like domain occupies 940–1101 (AQLSADGIST…QDIFYAQQNT (162 aa)). The interval 946–1105 (GISTKSLLVT…YAQQNTLLKK (160 aa)) is allosteric domain.

This sequence belongs to the CarB family. In terms of assembly, composed of two chains; the small (or glutamine) chain promotes the hydrolysis of glutamine to ammonia, which is used by the large (or ammonia) chain to synthesize carbamoyl phosphate. Tetramer of heterodimers (alpha,beta)4. The cofactor is Mg(2+). Mn(2+) serves as cofactor.

The catalysed reaction is hydrogencarbonate + L-glutamine + 2 ATP + H2O = carbamoyl phosphate + L-glutamate + 2 ADP + phosphate + 2 H(+). The enzyme catalyses hydrogencarbonate + NH4(+) + 2 ATP = carbamoyl phosphate + 2 ADP + phosphate + 2 H(+). It participates in amino-acid biosynthesis; L-arginine biosynthesis; carbamoyl phosphate from bicarbonate: step 1/1. The protein operates within pyrimidine metabolism; UMP biosynthesis via de novo pathway; (S)-dihydroorotate from bicarbonate: step 1/3. Its function is as follows. Large subunit of the glutamine-dependent carbamoyl phosphate synthetase (CPSase). CPSase catalyzes the formation of carbamoyl phosphate from the ammonia moiety of glutamine, carbonate, and phosphate donated by ATP, constituting the first step of 2 biosynthetic pathways, one leading to arginine and/or urea and the other to pyrimidine nucleotides. The large subunit (synthetase) binds the substrates ammonia (free or transferred from glutamine from the small subunit), hydrogencarbonate and ATP and carries out an ATP-coupled ligase reaction, activating hydrogencarbonate by forming carboxy phosphate which reacts with ammonia to form carbamoyl phosphate. The protein is Carbamoyl phosphate synthase large chain of Pseudothermotoga lettingae (strain ATCC BAA-301 / DSM 14385 / NBRC 107922 / TMO) (Thermotoga lettingae).